A 193-amino-acid chain; its full sequence is Probable DNA-directed RNA polymerase subunit delta (193 aa).

Residues 14–83 (LSMIEVARAI…GDNKWGLRSW (70 aa)) enclose the HTH HARE-type domain. 2 stretches are compositionally biased toward acidic residues: residues 119–133 (EDAIDYNDDDPEDEN) and 143–193 (YDND…ETND). The disordered stretch occupies residues 119 to 193 (EDAIDYNDDD…DDDYEDETND (75 aa)).

It belongs to the RpoE family. As to quaternary structure, RNAP is composed of a core of 2 alpha, a beta and a beta' subunits. The core is associated with a delta subunit and one of several sigma factors.

Its function is as follows. Participates in both the initiation and recycling phases of transcription. In the presence of the delta subunit, RNAP displays an increased specificity of transcription, a decreased affinity for nucleic acids, and an increased efficiency of RNA synthesis because of enhanced recycling. This Streptococcus thermophilus (strain CNRZ 1066) protein is Probable DNA-directed RNA polymerase subunit delta.